The primary structure comprises 785 residues: Semaphorin-3F (785 aa).

The first 18 residues, 1–18 (MLVTAFILWASLLTGAWP), serve as a signal peptide directing secretion. The region spanning 31 to 545 (RVRLSFKELK…SAVGVTHLSL (515 aa)) is the Sema domain. An N-linked (GlcNAc...) asparagine glycan is attached at asparagine 53. A disulfide bridge connects residues cysteine 104 and cysteine 115. A glycan (N-linked (GlcNAc...) asparagine) is linked at asparagine 126. 4 disulfide bridges follow: cysteine 133-cysteine 142, cysteine 300-cysteine 412, cysteine 324-cysteine 372, and cysteine 548-cysteine 566. A disordered region spans residues 583 to 602 (RSRRQDVRHGNPIRQCRGFN). The region spanning 605–695 (ANKNAVESVQ…KHIVTRVQLH (91 aa)) is the Ig-like C2-type domain. A disulfide bridge connects residues cysteine 678 and cysteine 746. Residues 753-785 (VPPRPREAPGALRPPELQDQKKPRNRRHHPPDT) form a disordered region. Basic residues predominate over residues 775–785 (PRNRRHHPPDT).

This sequence belongs to the semaphorin family. In terms of tissue distribution, expressed ubiquitously in adulthood. During embryogenesis, expressed in subregions of the central nervous system and various other tissues like skin, kidney, lung and intestine.

The protein localises to the secreted. The chain is Semaphorin-3F (Sema3f) from Mus musculus (Mouse).